The chain runs to 191 residues: Fe/S biogenesis protein NfuA (191 aa).

[4Fe-4S] cluster-binding residues include Cys-149 and Cys-152.

Belongs to the NfuA family. In terms of assembly, homodimer. [4Fe-4S] cluster is required as a cofactor.

Involved in iron-sulfur cluster biogenesis. Binds a 4Fe-4S cluster, can transfer this cluster to apoproteins, and thereby intervenes in the maturation of Fe/S proteins. Could also act as a scaffold/chaperone for damaged Fe/S proteins. This Yersinia pseudotuberculosis serotype O:1b (strain IP 31758) protein is Fe/S biogenesis protein NfuA.